Consider the following 1505-residue polypeptide: Anaphase-promoting complex subunit 1 (1505 aa).

The protein belongs to the APC1 family. In terms of assembly, the APC/C complex is probably composed of at least 12 subunits: apc-2, apc-10, apc-11, cdc-26, emb-1, emb-27, emb-30, mat-1, mat-2, mat-3, such-1 and gfi-3.

The protein operates within protein modification; protein ubiquitination. Its function is as follows. Probable component of the anaphase promoting complex/cyclosome (APC/C), a cell cycle-regulated E3 ubiquitin ligase that controls progression through mitosis and the G1 phase of the cell cycle. The APC/C complex acts by mediating ubiquitination and subsequent degradation of target proteins. Developmental role in early embryogenesis and the metaphase to anaphase transition in oocyte and spermatocyte meiosis and mitosis in germ cells. Required for embryonic anterior-posterior axis formation. Plays a role in regulating the abundance of glr-1 receptors in postmitotic neurons, which may in turn control animal locomotion. Involved in regulating GABA neurotransmitter release at neuromuscular junctions in GABA motor neurons. This chain is Anaphase-promoting complex subunit 1, found in Caenorhabditis elegans.